The primary structure comprises 85 residues: NAD(P)H-quinone oxidoreductase subunit O (85 aa).

This sequence belongs to the complex I NdhO subunit family. NDH-1 can be composed of about 15 different subunits; different subcomplexes with different compositions have been identified which probably have different functions.

It localises to the cellular thylakoid membrane. The catalysed reaction is a plastoquinone + NADH + (n+1) H(+)(in) = a plastoquinol + NAD(+) + n H(+)(out). It catalyses the reaction a plastoquinone + NADPH + (n+1) H(+)(in) = a plastoquinol + NADP(+) + n H(+)(out). In terms of biological role, NDH-1 shuttles electrons from an unknown electron donor, via FMN and iron-sulfur (Fe-S) centers, to quinones in the respiratory and/or the photosynthetic chain. The immediate electron acceptor for the enzyme in this species is believed to be plastoquinone. Couples the redox reaction to proton translocation, and thus conserves the redox energy in a proton gradient. Cyanobacterial NDH-1 also plays a role in inorganic carbon-concentration. The chain is NAD(P)H-quinone oxidoreductase subunit O from Synechococcus sp. (strain WH7803).